A 374-amino-acid polypeptide reads, in one-letter code: MAANVSGAKSCPANFLAAADDKLSGFQGDFLWPILVVEFLVAVASNGLALYRFSIRKQRPWHPAVVFSVQLAVSDLLCALTLPPLAAYLYPPKHWRYGEAACRLERFLFTCNLLGSVIFITCISLNRYLGIVHPFFARSHLRPKHAWAVSAAGWVLAALLAMPTLSFSHLKRPQQGAGNCSVARPEACIKCLGTADHGLAAYRAYSLVLAGLGCGLPLLLTLAAYGALGRAVLRSPGMTVAEKLRVAALVASGVALYASSYVPYHIMRVLNVDARRRWSTRCPSFADIAQATAALELGPYVGYQVMRGLMPLAFCVHPLLYMAAVPSLGCCCRHCPGYRDSWNPEDAKSTGQALPLNATAAPKPSEPQSRELSQ.

Residues 1–29 are Extracellular-facing; the sequence is MAANVSGAKSCPANFLAAADDKLSGFQGD. A glycan (N-linked (GlcNAc...) asparagine) is linked at Asn-4. Residues 30–50 form a helical membrane-spanning segment; it reads FLWPILVVEFLVAVASNGLAL. The Cytoplasmic portion of the chain corresponds to 51 to 64; the sequence is YRFSIRKQRPWHPA. Residues 65-85 traverse the membrane as a helical segment; it reads VVFSVQLAVSDLLCALTLPPL. Residues 86–116 are Extracellular-facing; sequence AAYLYPPKHWRYGEAACRLERFLFTCNLLGS. A disulfide bridge links Cys-102 with Cys-180. The chain crosses the membrane as a helical span at residues 117–137; that stretch reads VIFITCISLNRYLGIVHPFFA. At 138-146 the chain is on the cytoplasmic side; it reads RSHLRPKHA. Residues 147-167 traverse the membrane as a helical segment; the sequence is WAVSAAGWVLAALLAMPTLSF. The Extracellular portion of the chain corresponds to 168–206; sequence SHLKRPQQGAGNCSVARPEACIKCLGTADHGLAAYRAYS. N-linked (GlcNAc...) asparagine glycosylation occurs at Asn-179. A helical membrane pass occupies residues 207–227; sequence LVLAGLGCGLPLLLTLAAYGA. The Cytoplasmic portion of the chain corresponds to 228 to 245; that stretch reads LGRAVLRSPGMTVAEKLR. Residues 246–266 traverse the membrane as a helical segment; it reads VAALVASGVALYASSYVPYHI. At 267 to 308 the chain is on the extracellular side; sequence MRVLNVDARRRWSTRCPSFADIAQATAALELGPYVGYQVMRG. A helical membrane pass occupies residues 309–329; sequence LMPLAFCVHPLLYMAAVPSLG. Residues 330–374 lie on the Cytoplasmic side of the membrane; that stretch reads CCCRHCPGYRDSWNPEDAKSTGQALPLNATAAPKPSEPQSRELSQ. The segment at 345-374 is disordered; the sequence is EDAKSTGQALPLNATAAPKPSEPQSRELSQ.

The protein belongs to the G-protein coupled receptor 1 family. In terms of tissue distribution, highest expression in liver and spleen.

Its subcellular location is the cell membrane. In terms of biological role, receptor for ATP and ADP coupled to G-proteins that activate both phosphatidylinositol-calcium and adenylyl cyclase second messenger systems. Not activated by UTP or UDP. This is P2Y purinoceptor 11 (P2RY11) from Homo sapiens (Human).